A 35-amino-acid chain; its full sequence is Surfactant protein C (35 aa).

Residues cysteine 5 and cysteine 6 are each lipidated (S-palmitoyl cysteine).

It localises to the secreted. The protein localises to the extracellular space. Its subcellular location is the surface film. In terms of biological role, pulmonary surfactant associated proteins promote alveolar stability by lowering the surface tension at the air-liquid interface in the peripheral air spaces. The sequence is that of Surfactant protein C (SFTPC) from Sus scrofa (Pig).